Consider the following 254-residue polypeptide: Phosphatidylglycerophosphatase B (254 aa).

The chain crosses the membrane as a helical span at residues 2–24 (RSIARRTAVGAALLLVMPVAVWI). At 25–54 (SGWRWQPGEQSWLLKAAFWVTETVTQPWGV) the chain is on the periplasmic side. A helical transmembrane segment spans residues 55 to 66 (ITHLILFGWFLW). Residues 67 to 71 (CLRFR) are Cytoplasmic-facing. A helical membrane pass occupies residues 72-94 (IKAAFVLFAILAAAILVGQGVKS). The Periplasmic portion of the chain corresponds to 95 to 161 (WIKDKVQEPR…QKETGFAFPS (67 aa)). Residues 97–105 (KDKVQEPRP) are phosphatase sequence motif I. The interval 160–163 (PSGH) is phosphatase sequence motif II. Residues 162–176 (GHTMFAASWALLAVG) form a helical membrane-spanning segment. The active-site Proton donor; for a subset of substrates is histidine 163. Residues 177-182 (LLWPRR) are Cytoplasmic-facing. A helical membrane pass occupies residues 183 to 202 (RTLTIAILLVWATGVMGSRL). Residues 200–211 (SRLLLGMHWPRD) are phosphatase sequence motif III. Residues 203-208 (LLGMHW) are Periplasmic-facing. The active-site Nucleophile is histidine 207. The chain crosses the membrane as a helical span at residues 209–232 (PRDLVVATLISWALVAVATWLAQR). Residues 233–254 (ICGPLTPPAEENREIAQREQES) are Cytoplasmic-facing.

It belongs to the PA-phosphatase related phosphoesterase family. Post-translationally, the N-terminus is blocked.

The protein resides in the cell inner membrane. Its subcellular location is the cell outer membrane. It catalyses the reaction a 1,2-diacyl-sn-glycero-3-phospho-(1'-sn-glycero-3'-phosphate) + H2O = a 1,2-diacyl-sn-glycero-3-phospho-(1'-sn-glycerol) + phosphate. The enzyme catalyses a 1,2-diacyl-sn-glycerol 3-diphosphate + H2O = a 1,2-diacyl-sn-glycero-3-phosphate + phosphate + H(+). It carries out the reaction a 1,2-diacyl-sn-glycero-3-phosphate + H2O = a 1,2-diacyl-sn-glycerol + phosphate. The catalysed reaction is di-trans,octa-cis-undecaprenyl diphosphate + H2O = di-trans,octa-cis-undecaprenyl phosphate + phosphate + H(+). It participates in phospholipid metabolism; phosphatidylglycerol biosynthesis; phosphatidylglycerol from CDP-diacylglycerol: step 2/2. In terms of biological role, catalyzes the dephosphorylation of diacylglycerol diphosphate (DGPP) to phosphatidate (PA) and the subsequent dephosphorylation of PA to diacylglycerol (DAG). Also has undecaprenyl pyrophosphate phosphatase activity, required for the biosynthesis of the lipid carrier undecaprenyl phosphate. Can also use lysophosphatidic acid (LPA) and phosphatidylglycerophosphate as substrates. The pattern of activities varies according to subcellular location, PGP phosphatase activity is higher in the cytoplasmic membrane, whereas PA and LPA phosphatase activities are higher in the outer membrane. Activity is independent of a divalent cation ion and insensitive to inhibition by N-ethylmaleimide. This is Phosphatidylglycerophosphatase B (pgpB) from Escherichia coli O157:H7.